The sequence spans 197 residues: Glycerol-3-phosphate acyltransferase (197 aa).

Helical transmembrane passes span 1–21 (MNILIIFASYLLGSLPTGFLI), 50–70 (WPALFVFIIDLGKGLIAVKIA), 77–97 (GLIEVIAGISAISGHIWPIWL), 111–131 (MFLALSWKVGLASLGFFLIVL), 137–157 (VSLSSISAAILLPIFMFFYLG), and 158–178 (KFMHSYFFISLIVALLVIWKH).

Belongs to the PlsY family. As to quaternary structure, probably interacts with PlsX.

Its subcellular location is the cell inner membrane. The catalysed reaction is an acyl phosphate + sn-glycerol 3-phosphate = a 1-acyl-sn-glycero-3-phosphate + phosphate. It functions in the pathway lipid metabolism; phospholipid metabolism. Functionally, catalyzes the transfer of an acyl group from acyl-phosphate (acyl-PO(4)) to glycerol-3-phosphate (G3P) to form lysophosphatidic acid (LPA). This enzyme utilizes acyl-phosphate as fatty acyl donor, but not acyl-CoA or acyl-ACP. The chain is Glycerol-3-phosphate acyltransferase from Prochlorococcus marinus (strain MIT 9301).